Reading from the N-terminus, the 314-residue chain is Ribosomal RNA small subunit methyltransferase H (314 aa).

S-adenosyl-L-methionine contacts are provided by residues 36 to 38, Asp56, Phe83, Asp104, and Gln111; that span reads AGH.

Belongs to the methyltransferase superfamily. RsmH family.

Its subcellular location is the cytoplasm. The catalysed reaction is cytidine(1402) in 16S rRNA + S-adenosyl-L-methionine = N(4)-methylcytidine(1402) in 16S rRNA + S-adenosyl-L-homocysteine + H(+). Its function is as follows. Specifically methylates the N4 position of cytidine in position 1402 (C1402) of 16S rRNA. The chain is Ribosomal RNA small subunit methyltransferase H from Brevibacillus brevis (strain 47 / JCM 6285 / NBRC 100599).